A 373-amino-acid polypeptide reads, in one-letter code: 3-dehydroquinate synthase (373 aa).

NAD(+)-binding positions include Gly-107 to Asp-111, Thr-131 to Ser-132, Lys-144, and Lys-153. Residues Glu-186, His-249, and His-267 each contribute to the Zn(2+) site.

The protein belongs to the sugar phosphate cyclases superfamily. Dehydroquinate synthase family. Requires Co(2+) as cofactor. The cofactor is Zn(2+). NAD(+) serves as cofactor.

It is found in the cytoplasm. It carries out the reaction 7-phospho-2-dehydro-3-deoxy-D-arabino-heptonate = 3-dehydroquinate + phosphate. It participates in metabolic intermediate biosynthesis; chorismate biosynthesis; chorismate from D-erythrose 4-phosphate and phosphoenolpyruvate: step 2/7. Functionally, catalyzes the conversion of 3-deoxy-D-arabino-heptulosonate 7-phosphate (DAHP) to dehydroquinate (DHQ). This is 3-dehydroquinate synthase from Ruegeria sp. (strain TM1040) (Silicibacter sp.).